Here is a 394-residue protein sequence, read N- to C-terminus: MAKAKFERTKPHVNIGTIGHVDHGKTSLTAAITIVLAKTGGAQATAYDQIDAAPEEKERGITISTAHVEYETKNRHYAHVDCPGHADYVKNMITGAAQMDGAILVVSAADGPMPQTREHILLAKQVGVPAMVVFLNKIDMVDDPDLLELVEMEVRELLSKYGFPGDEIPIIKGSALQALEGKPEGEKAINELMDAVDSYIPQPVRATDKPFLMPIEDVFSISGRGTVVTGRVESGIIKVGEEIEIVGLKDTQKTTCTGVEMFRKLLDEGQAGDNVGILLRGTKREEVERGQVLAKPGSIKPHDKFEAEVYVLSKEEGGRHTPFTNDYRPQFYFRTTDVTGTIKLPADKQMVMPGDNATFTVELIKPIAMQEGLKFSIREGGRTVGAGVVTKINN.

The tr-type G domain maps to 10–204 (KPHVNIGTIG…AVDSYIPQPV (195 aa)). The interval 19 to 26 (GHVDHGKT) is G1. Residue 19–26 (GHVDHGKT) participates in GTP binding. Threonine 26 contributes to the Mg(2+) binding site. Residues 60–64 (GITIS) are G2. Residues 81–84 (DCPG) are G3. GTP is bound by residues 81 to 85 (DCPGH) and 136 to 139 (NKID). Residues 136 to 139 (NKID) are G4. Residues 174 to 176 (SAL) are G5.

The protein belongs to the TRAFAC class translation factor GTPase superfamily. Classic translation factor GTPase family. EF-Tu/EF-1A subfamily. Monomer.

It localises to the cytoplasm. The enzyme catalyses GTP + H2O = GDP + phosphate + H(+). Its function is as follows. GTP hydrolase that promotes the GTP-dependent binding of aminoacyl-tRNA to the A-site of ribosomes during protein biosynthesis. The sequence is that of Elongation factor Tu from Rickettsia peacockii (strain Rustic).